The sequence spans 194 residues: Protein GrpE (194 aa).

Basic and acidic residues predominate over residues 1–12 (MNKQKNNRERTP). The tract at residues 1 to 44 (MNKQKNNRERTPQPEQDTERDEQLTNSHENDIDSAPAAEENDKV) is disordered.

This sequence belongs to the GrpE family. In terms of assembly, homodimer.

Its subcellular location is the cytoplasm. Its function is as follows. Participates actively in the response to hyperosmotic and heat shock by preventing the aggregation of stress-denatured proteins, in association with DnaK and GrpE. It is the nucleotide exchange factor for DnaK and may function as a thermosensor. Unfolded proteins bind initially to DnaJ; upon interaction with the DnaJ-bound protein, DnaK hydrolyzes its bound ATP, resulting in the formation of a stable complex. GrpE releases ADP from DnaK; ATP binding to DnaK triggers the release of the substrate protein, thus completing the reaction cycle. Several rounds of ATP-dependent interactions between DnaJ, DnaK and GrpE are required for fully efficient folding. The sequence is that of Protein GrpE from Porphyromonas gingivalis (strain ATCC 33277 / DSM 20709 / CIP 103683 / JCM 12257 / NCTC 11834 / 2561).